A 140-amino-acid chain; its full sequence is Nucleoside diphosphate kinase (140 aa).

6 residues coordinate ATP: lysine 11, phenylalanine 59, arginine 87, threonine 93, arginine 104, and asparagine 114. Histidine 117 acts as the Pros-phosphohistidine intermediate in catalysis.

The protein belongs to the NDK family. Homotetramer. Mg(2+) serves as cofactor.

The protein localises to the cytoplasm. It carries out the reaction a 2'-deoxyribonucleoside 5'-diphosphate + ATP = a 2'-deoxyribonucleoside 5'-triphosphate + ADP. It catalyses the reaction a ribonucleoside 5'-diphosphate + ATP = a ribonucleoside 5'-triphosphate + ADP. Functionally, major role in the synthesis of nucleoside triphosphates other than ATP. The ATP gamma phosphate is transferred to the NDP beta phosphate via a ping-pong mechanism, using a phosphorylated active-site intermediate. The protein is Nucleoside diphosphate kinase of Rickettsia prowazekii (strain Madrid E).